The sequence spans 73 residues: MERKVFLLLFVIVLLTLPGFMSAAKKEIPYKRQKFPKKSQCIEACANALTNGDKSKITDVKSRFYKCICYYNP.

An N-terminal signal peptide occupies residues 1–23 (MERKVFLLLFVIVLLTLPGFMSA).

Belongs to the scoloptoxin-15 family. Contains 2 disulfide bonds. As to expression, expressed by the venom gland.

It is found in the secreted. The polypeptide is U-scoloptoxin(15)-Sm3a (Scolopendra morsitans (Tanzanian blue ringleg centipede)).